The sequence spans 52 residues: KACPRNCDTDIAYMVCPSSGERIIRKVCTNCCAAQKGCKLFRSNGSIKCTGT.

Intrachain disulfides connect Cys-3/Cys-32, Cys-7/Cys-28, Cys-16/Cys-38, and Cys-31/Cys-49.

Functionally, potent inhibitor of trypsin and a weaker inhibitor of chymotrypsin. It does not inhibit elastase and subtilisin DY. The chain is Proteinase inhibitor PSI-1.2 from Capsicum annuum (Capsicum pepper).